We begin with the raw amino-acid sequence, 145 residues long: 3-dehydroquinate dehydratase (145 aa).

Y24 (proton acceptor) is an active-site residue. Substrate contacts are provided by N75, H81, and D88. The active-site Proton donor is H101. Substrate contacts are provided by residues 102–103 (IS) and R112.

This sequence belongs to the type-II 3-dehydroquinase family. As to quaternary structure, homododecamer.

It catalyses the reaction 3-dehydroquinate = 3-dehydroshikimate + H2O. The protein operates within metabolic intermediate biosynthesis; chorismate biosynthesis; chorismate from D-erythrose 4-phosphate and phosphoenolpyruvate: step 3/7. Its function is as follows. Catalyzes a trans-dehydration via an enolate intermediate. This Rhizobium johnstonii (strain DSM 114642 / LMG 32736 / 3841) (Rhizobium leguminosarum bv. viciae) protein is 3-dehydroquinate dehydratase.